The following is a 392-amino-acid chain: Caveolae-associated protein 1 (392 aa).

At Met1 the chain carries N-acetylmethionine. The span at 1–10 (MEDVTLHIVE) shows a compositional bias: basic and acidic residues. The tract at residues 1–45 (MEDVTLHIVERPYSGYPDASSEGPEPTPGEARATEEPSGTGSDEL) is disordered. The tract at residues 1-100 (MEDVTLHIVE…IQGELSKLGK (100 aa)) is required for homotrimerization and for interaction with CAVIN2 and CAVIN3. Ser21 and Ser38 each carry phosphoserine. Thr40 carries the post-translational modification Phosphothreonine. Phosphoserine occurs at positions 42 and 48. The tract at residues 54 to 64 (VLVLSLLDKII) is nuclear export signal. The tract at residues 55-77 (LVLSLLDKIIGAVDQIQLTQAQL) is leucine-zipper 1. Residue Lys118 forms a Glycyl lysine isopeptide (Lys-Gly) (interchain with G-Cter in SUMO2) linkage. Phosphoserine is present on Ser120. A Glycyl lysine isopeptide (Lys-Gly) (interchain with G-Cter in SUMO2) cross-link involves residue Lys124. Residues 138–154 (KKLEVNEAELLRRRNFK) form a nuclear localization signal region. Residue Tyr158 is modified to Phosphotyrosine. Lys163 participates in a covalent cross-link: Glycyl lysine isopeptide (Lys-Gly) (interchain with G-Cter in SUMO1); alternate. A Glycyl lysine isopeptide (Lys-Gly) (interchain with G-Cter in SUMO2); alternate cross-link involves residue Lys163. Lys167 is covalently cross-linked (Glycyl lysine isopeptide (Lys-Gly) (interchain with G-Cter in SUMO2)). The tract at residues 168–188 (LSVSKSLKESEALPEKEGDEL) is leucine-zipper 2. A phosphoserine mark is found at Ser169 and Ser171. Residue Lys172 forms a Glycyl lysine isopeptide (Lys-Gly) (interchain with G-Cter in SUMO2) linkage. A phosphoserine mark is found at Ser173 and Ser177. Basic and acidic residues predominate over residues 173 to 183 (SLKESEALPEK). Residues 173–198 (SLKESEALPEKEGDELGEGERPEEDA) are disordered. Residues 184-198 (EGDELGEGERPEEDA) are compositionally biased toward acidic residues. The stretch at 201–284 (IELSSDEAVE…RMNKLGTRLV (84 aa)) forms a coiled coil. Phosphoserine is present on residues Ser204 and Ser205. Residues 235–251 (KKAFSKEKMEKTKVRTR) form a nuclear localization signal region. The segment at 259 to 299 (LKTKENLEKTRHTLEKRMNKLGTRLVPVERREKLKTSRDKL) is leucine-zipper 3. Ser302 bears the Phosphoserine mark. Thr304 is subject to Phosphothreonine. The residue at position 310 (Tyr310) is a Phosphotyrosine. Lys328 participates in a covalent cross-link: Glycyl lysine isopeptide (Lys-Gly) (interchain with G-Cter in SUMO2). A disordered region spans residues 347–367 (GPDDDEVGAERGAETDLLRGS). Basic and acidic residues predominate over residues 354–363 (GAERGAETDL). Residues Ser367, Ser368, Ser381, Ser389, and Ser391 each carry the phosphoserine modification.

It belongs to the CAVIN family. In terms of assembly, component of the CAVIN complex composed of CAVIN1, CAVIN2, CAVIN3 and CAVIN4. Interacts with RNA polymerase I subunit POLR1A/RPA1 and TTF1. Binds the 3' end of pre-rRNA. Interacts with transcription factor ZNF148. Interacts with LIPE in the adipocyte cytoplasm. Interacts with CAV1, CAV3, CAVIN2, CAVIN3 and CAVIN4. Post-translationally, phosphorylated. Present in active and inactive forms. Changes in phosphorylation pattern may alter activity. Phosphorylation at Tyr-158 is essential for its function in the regulation of ribosomal transcriptional activity. In terms of processing, monoubiquitinated. Expressed in the adipocyte (at protein level). Expressed in all striated and smooth muscles tested including diaphragm, esophageal striated muscle, fibroblast, endocardial endothelium, epicardial mesothelium, intestinal smooth muscle, masseter, soleus muscle, vascular smooth muscle and white gastrocnemius muscle (at protein level). Expressed in the endothelium and perineural sheath (at protein level). Not expressed in hepatocytes.

The protein resides in the membrane. Its subcellular location is the caveola. The protein localises to the cell membrane. It is found in the microsome. It localises to the endoplasmic reticulum. The protein resides in the cytoplasm. Its subcellular location is the cytosol. The protein localises to the mitochondrion. It is found in the nucleus. Its function is as follows. Plays an important role in caveolae formation and organization. Essential for the formation of caveolae in all tissues. Core component of the CAVIN complex which is essential for recruitment of the complex to the caveolae in presence of calveolin-1 (CAV1). Essential for normal oligomerization of CAV1. Promotes ribosomal transcriptional activity in response to metabolic challenges in the adipocytes and plays an important role in the formation of the ribosomal transcriptional loop. Dissociates transcription complexes paused by DNA-bound TTF1, thereby releasing both RNA polymerase I and pre-RNA from the template. The caveolae biogenesis pathway is required for the secretion of proteins such as GASK1A. This Rattus norvegicus (Rat) protein is Caveolae-associated protein 1.